The sequence spans 97 residues: YcgL domain-containing protein PP_4590 (97 aa).

Positions 3 to 87 (RICSIYKSPR…LEDEYIEHLP (85 aa)) constitute a YcgL domain.

This chain is YcgL domain-containing protein PP_4590, found in Pseudomonas putida (strain ATCC 47054 / DSM 6125 / CFBP 8728 / NCIMB 11950 / KT2440).